The primary structure comprises 564 residues: MALAKESSIVVSSSPDVTHNITRPVASYHPNVWGDRFLLSSSDQVQLTMKARDDKVVVDELKKEVRRKLKEASNDYIRLLQTVDVIQRLGLAYHFEEEIDQALRYLFETFHDYSEDSQDMYANSLSFRLLRQHGYRISCEIFEKFKDANGGFKIPNIEGVMGMLEFYEATHLRVRGEDILDHGFVFSRNYLKSVLPSLSNPLAAQVDRALNQNSNRRGLPRLEARHFMSVYEQYASHDQALLKLAKLNFNILQSLHKVELSEISRWWKGVDIARNFPYARDRIVELYFWVLGVYFEPQYAVGRKITTKVIAIASLLDDTFDAYGTFEELRIFAEAVERWSVSCLDQLPEYMKLLYKTMLEVSDEIEEEMTKLGTPFRIAYGIEAIKTFARSYFLEAKWREEKYKPTTEEYMGLATKTCGYKSLIITSFLAMGDIPKREHFDWVLSDPDFVMASCIICRLADDIVGHEFEQTRDHIPSSVECYTQEHKTSKEDAVNELYDRLESAWKDLNEGFLRPTKIPAALLYRVLNYCRIIEVMYSRGDWYTHVGPEMQGFVRQLLVDPVPE.

Mg(2+) contacts are provided by D317, D321, D461, and E469. The DDXXD motif motif lies at 317–321 (DDTFD).

The protein belongs to the terpene synthase family. It depends on Mg(2+) as a cofactor.

The catalysed reaction is (2E,6E)-farnesyl diphosphate = alpha-copaene + diphosphate. The enzyme catalyses (2E,6E)-farnesyl diphosphate = delta-cadinene + diphosphate. It functions in the pathway secondary metabolite biosynthesis; terpenoid biosynthesis. Its function is as follows. Sesquiterpene synthase converting farnesyl diphosphate to alpha copaene and delta-cadinene as the major products. This Phyla dulcis (Aztec sweet herb) protein is Bifunctional sesquiterpene synthase 1.